A 143-amino-acid polypeptide reads, in one-letter code: Nucleoside diphosphate kinase (143 aa).

ATP contacts are provided by lysine 11, phenylalanine 59, arginine 87, threonine 93, arginine 104, and asparagine 114. Catalysis depends on histidine 117, which acts as the Pros-phosphohistidine intermediate.

Belongs to the NDK family. Homotetramer. Mg(2+) serves as cofactor.

The protein localises to the cytoplasm. It catalyses the reaction a 2'-deoxyribonucleoside 5'-diphosphate + ATP = a 2'-deoxyribonucleoside 5'-triphosphate + ADP. The enzyme catalyses a ribonucleoside 5'-diphosphate + ATP = a ribonucleoside 5'-triphosphate + ADP. In terms of biological role, major role in the synthesis of nucleoside triphosphates other than ATP. The ATP gamma phosphate is transferred to the NDP beta phosphate via a ping-pong mechanism, using a phosphorylated active-site intermediate. The protein is Nucleoside diphosphate kinase of Thioalkalivibrio sulfidiphilus (strain HL-EbGR7).